Here is a 466-residue protein sequence, read N- to C-terminus: Tryptophan synthase beta chain 2, chloroplastic (466 aa).

Lysine 161 carries the N6-(pyridoxal phosphate)lysine modification.

It belongs to the TrpB family. Tetramer of two alpha and two beta chains. The cofactor is pyridoxal 5'-phosphate.

It localises to the plastid. It is found in the chloroplast. The enzyme catalyses (1S,2R)-1-C-(indol-3-yl)glycerol 3-phosphate + L-serine = D-glyceraldehyde 3-phosphate + L-tryptophan + H2O. It functions in the pathway amino-acid biosynthesis; L-tryptophan biosynthesis; L-tryptophan from chorismate: step 5/5. In terms of biological role, the beta subunit is responsible for the synthesis of L-tryptophan from indole and L-serine. The protein is Tryptophan synthase beta chain 2, chloroplastic (TSB) of Camptotheca acuminata (Happy tree).